The following is a 317-amino-acid chain: Probable RuBisCO transcriptional regulator (317 aa).

The 58-residue stretch at F6–T63 folds into the HTH lysR-type domain. A DNA-binding region (H-T-H motif) is located at residues F23–Q42.

It belongs to the LysR transcriptional regulatory family.

It localises to the plastid. The protein localises to the chloroplast. Functionally, trans-acting transcriptional regulator of RuBisCO genes (rbcL and rbcS) expression. The chain is Probable RuBisCO transcriptional regulator (rbcR) from Porphyra purpurea (Red seaweed).